The sequence spans 887 residues: Phosphatidylinositol 3-kinase catalytic subunit type 3 (887 aa).

The C2 PI3K-type domain maps to 35–184 (YKAVLEDPML…LAKLTKAHRQ (150 aa)). The interval 149-170 (VEADGSEPTRTPGRTSSTLSED) is disordered. Residues 156-170 (PTRTPGRTSSTLSED) show a composition bias toward polar residues. T163 is modified (phosphothreonine; by AMPK). A Phosphoserine; by AMPK modification is found at S165. 3 positions are modified to phosphoserine: S244, S261, and S282. One can recognise a PIK helical domain in the interval 283 to 520 (DHDLKPNATT…PKTHEMYLNV (238 aa)). Residues 416–467 (EPTKKDSQASVSESLSSSGVSSADIDSSQIITNPLPPVASPPPASKSKEVSD) are disordered. Residues 423-444 (QASVSESLSSSGVSSADIDSSQ) show a composition bias toward low complexity. Over residues 449 to 459 (PLPPVASPPPA) the composition is skewed to pro residues. The 267-residue stretch at 605-871 (IPETATLFKS…LIDESVHALF (267 aa)) folds into the PI3K/PI4K catalytic domain. Residues 611 to 617 (LFKSALM) are G-loop. The segment at 740 to 748 (GVGDRHLDN) is catalytic loop. Residues 759-780 (HIDFGYILGRDPKPLPPPMKLN) are activation loop.

It belongs to the PI3/PI4-kinase family. As to quaternary structure, component of the PI3K (PI3KC3/PI3K-III/class III phosphatidylinositol 3-kinase) complex the core of which is composed of the catalytic subunit PIK3C3, the regulatory subunit PIK3R4 and BECN1 associating with additional regulatory/auxiliary subunits to form alternative complex forms. Alternative complex forms containing a fourth regulatory subunit in a mutually exclusive manner are: the PI3K complex I (PI3KC3-C1) containing ATG14, and the PI3K complex II (PI3KC3-C2) containing UVRAG. PI3KC3-C1 displays a V-shaped architecture with PIK3R4 serving as a bridge between PIK3C3 and the ATG14:BECN1 subcomplex. Both, PI3KC3-C1 and PI3KC3-C2, can associate with further regulatory subunits such as RUBCN, SH3GLB1/Bif-1 and AMBRA1. PI3KC3-C1 probably associates with PIK3CB. Interacts with RAB7A in the presence of PIK3R4. Interacts with AMBRA1. Interacts with BECN1P1/BECN2. Interacts with SLAMF1. May interact with DYN2. May be a component of a complex composed of RAB5A (in GDP-bound form), DYN2 and PIK3C3. Interacts with NCKAP1L. Interacts with ATG14; this interaction is increased in the absence of TMEM39A. Interacts with STEEP1; the interaction is STING1-dependent and required for trafficking of STING1 from the endoplasmic reticulum. Interacts with YWHAG. Interacts with ARMC3. The cofactor is Mn(2+). Post-translationally, ubiquitinated via 'Lys-29'- and 'Lys-48'-linked ubiquitination by UBE3C, promoting its degradation. Deubiquitination by ZRANB1/TRABID promotes its stabilization, leading to autophagosome maturation.

It is found in the midbody. The protein localises to the late endosome. Its subcellular location is the cytoplasmic vesicle. It localises to the autophagosome. It catalyses the reaction a 1,2-diacyl-sn-glycero-3-phospho-(1D-myo-inositol) + ATP = a 1,2-diacyl-sn-glycero-3-phospho-(1D-myo-inositol-3-phosphate) + ADP + H(+). In terms of biological role, catalytic subunit of the PI3K complex that mediates formation of phosphatidylinositol 3-phosphate; different complex forms are believed to play a role in multiple membrane trafficking pathways: PI3KC3-C1 is involved in initiation of autophagosomes and PI3KC3-C2 in maturation of autophagosomes and endocytosis. As part of PI3KC3-C1, promotes endoplasmic reticulum membrane curvature formation prior to vesicle budding. Involved in regulation of degradative endocytic trafficking and required for the abscission step in cytokinesis, probably in the context of PI3KC3-C2. Involved in the transport of lysosomal enzyme precursors to lysosomes. Required for transport from early to late endosomes. The sequence is that of Phosphatidylinositol 3-kinase catalytic subunit type 3 from Rattus norvegicus (Rat).